Reading from the N-terminus, the 229-residue chain is GTP cyclohydrolase 1 (229 aa).

The Zn(2+) site is built by C116, H119, and C187.

The protein belongs to the GTP cyclohydrolase I family. As to quaternary structure, toroid-shaped homodecamer, composed of two pentamers of five dimers.

The catalysed reaction is GTP + H2O = 7,8-dihydroneopterin 3'-triphosphate + formate + H(+). Its pathway is cofactor biosynthesis; 7,8-dihydroneopterin triphosphate biosynthesis; 7,8-dihydroneopterin triphosphate from GTP: step 1/1. In Synechococcus sp. (strain JA-3-3Ab) (Cyanobacteria bacterium Yellowstone A-Prime), this protein is GTP cyclohydrolase 1.